Reading from the N-terminus, the 404-residue chain is Cysteine desulfurase IscS (404 aa).

Pyridoxal 5'-phosphate contacts are provided by residues 75 to 76 (AT), N155, Q183, and 203 to 205 (SGH). N6-(pyridoxal phosphate)lysine is present on K206. Residue T243 participates in pyridoxal 5'-phosphate binding. Residue C328 is the Cysteine persulfide intermediate of the active site. Residue C328 coordinates [2Fe-2S] cluster.

Belongs to the class-V pyridoxal-phosphate-dependent aminotransferase family. NifS/IscS subfamily. In terms of assembly, homodimer. Forms a heterotetramer with IscU, interacts with other sulfur acceptors. Pyridoxal 5'-phosphate serves as cofactor.

It localises to the cytoplasm. The catalysed reaction is (sulfur carrier)-H + L-cysteine = (sulfur carrier)-SH + L-alanine. Its pathway is cofactor biosynthesis; iron-sulfur cluster biosynthesis. Functionally, master enzyme that delivers sulfur to a number of partners involved in Fe-S cluster assembly, tRNA modification or cofactor biosynthesis. Catalyzes the removal of elemental sulfur atoms from cysteine to produce alanine. Functions as a sulfur delivery protein for Fe-S cluster synthesis onto IscU, an Fe-S scaffold assembly protein, as well as other S acceptor proteins. The chain is Cysteine desulfurase IscS from Shewanella amazonensis (strain ATCC BAA-1098 / SB2B).